Here is a 363-residue protein sequence, read N- to C-terminus: Peptide chain release factor 1 (363 aa).

Gln-236 carries the post-translational modification N5-methylglutamine. The interval 286–305 (KKEMERSTMRKSQIGSGDRS) is disordered.

This sequence belongs to the prokaryotic/mitochondrial release factor family. Post-translationally, methylated by PrmC. Methylation increases the termination efficiency of RF1.

It localises to the cytoplasm. Its function is as follows. Peptide chain release factor 1 directs the termination of translation in response to the peptide chain termination codons UAG and UAA. This chain is Peptide chain release factor 1, found in Wolbachia pipientis subsp. Culex pipiens (strain wPip).